We begin with the raw amino-acid sequence, 395 residues long: 8-amino-7-oxononanoate synthase (395 aa).

Arginine 24 contributes to the substrate binding site. A pyridoxal 5'-phosphate-binding site is contributed by 111-112; the sequence is GF. Histidine 136 lines the substrate pocket. Pyridoxal 5'-phosphate is bound by residues serine 184, 209-212, and 240-243; these read DDAH and TLSK. At lysine 243 the chain carries N6-(pyridoxal phosphate)lysine. Threonine 357 lines the substrate pocket.

The protein belongs to the class-II pyridoxal-phosphate-dependent aminotransferase family. BioF subfamily. As to quaternary structure, homodimer. Pyridoxal 5'-phosphate serves as cofactor.

The catalysed reaction is 6-carboxyhexanoyl-[ACP] + L-alanine + H(+) = (8S)-8-amino-7-oxononanoate + holo-[ACP] + CO2. It functions in the pathway cofactor biosynthesis; biotin biosynthesis. In terms of biological role, catalyzes the decarboxylative condensation of pimeloyl-[acyl-carrier protein] and L-alanine to produce 8-amino-7-oxononanoate (AON), [acyl-carrier protein], and carbon dioxide. This Alkaliphilus oremlandii (strain OhILAs) (Clostridium oremlandii (strain OhILAs)) protein is 8-amino-7-oxononanoate synthase.